Here is a 581-residue protein sequence, read N- to C-terminus: CUE domain-containing protein 3 (581 aa).

The CUE domain maps to 271–314 (INPGDVKSLIELFPQLSVEEAVEHLSASLGNIDAACESVITSSL). Tyr-386 bears the Phosphotyrosine mark. Disordered stretches follow at residues 422 to 448 (DDTYDDLDTTGPVDSGVGDDDPEASSK) and 522 to 581 (GSGN…SNEK). The span at 522 to 542 (GSGNTNIGSLRQTKFKQSNYT) shows a compositional bias: polar residues. The span at 552-581 (QHRPSRPSKNPSLKKKKYVRTKPKKASNEK) shows a compositional bias: basic residues.

As to quaternary structure, component of the RQT (ribosome quality control trigger) complex.

Its subcellular location is the cytoplasm. The protein localises to the nucleus. In terms of biological role, involved in activation of the ribosome quality control (RQC) pathway, a pathway that degrades nascent peptide chains during problematic translation. Specifically recognizes and binds RPS20/uS10 ubiquitinated by HEL2, promoting recruitment of the RQT (ribosome quality control trigger) complex on stalled ribosomes, followed by disassembly of stalled ribosomes. The chain is CUE domain-containing protein 3 from Schizosaccharomyces pombe (strain 972 / ATCC 24843) (Fission yeast).